The primary structure comprises 300 residues: Protein YIF1B (300 aa).

Positions 1 to 46 (MNQESSFRAPPKRRVRGPNPNISTPHQLFDDTSGGPVPHGGEYPNH) are disordered. Topologically, residues 1-142 (MNQESSFRAP…APRFDINAPD (142 aa)) are cytoplasmic. A helical membrane pass occupies residues 143-163 (LYIPVMAFITYILVAGLALGT). Topologically, residues 164–178 (QSRFSPEILGMQASS) are extracellular. The chain crosses the membrane as a helical span at residues 179 to 199 (ALAWLIVEVLAILLSLYLVTV). Over 200 to 205 (NTDLTT) the chain is Cytoplasmic. Residues 206 to 226 (VDLVAFSGYKYVGMISGVISG) form a helical membrane-spanning segment. Position 227 (Leu227) is a topological domain, extracellular. A helical membrane pass occupies residues 228 to 248 (LFGKTGYYVVLSWCGISVVFF). Topologically, residues 249-278 (MIRTLRLKILSEAAAEGVLVRGARNQLRMY) are cytoplasmic. A helical membrane pass occupies residues 279–299 (LTMAIAAVQPIFMYWLTYHLV). Arg300 is a topological domain (extracellular).

The protein belongs to the YIF1 family.

The protein resides in the endoplasmic reticulum membrane. It localises to the golgi apparatus membrane. It is found in the endoplasmic reticulum-Golgi intermediate compartment membrane. Its function is as follows. Functions in endoplasmic reticulum to Golgi vesicle-mediated transport and regulates the proper organization of the endoplasmic reticulum and the Golgi. Plays a key role in targeting to neuronal dendrites receptors such as HTR1A. Plays also a role in primary cilium and sperm flagellum assembly probably through protein transport to these compartments. The sequence is that of Protein YIF1B (yif1b) from Xenopus tropicalis (Western clawed frog).